Reading from the N-terminus, the 285-residue chain is NADH-dependent oxidoreductase ucdB (285 aa).

Thr-87 provides a ligand contact to NAD(+). Residue Lys-156 is part of the active site.

The protein belongs to the HIBADH-related family. NP60 subfamily.

The protein operates within secondary metabolite biosynthesis. Functionally, nonribosomal peptide synthetase that mediates the biosynthesis of usterphenyllins and uscandidusins, p-terphenyl derivatives. Within the pathway, ucdB alone catalyzes both reduction and dehydration of atromentin to form a terphenyl triol intermediate. The pathway begin with the biosynthesis of 4-hydroxyphenylpyruvate (HPPA) from L-tyrosine, possibly by the aminotransferase ucdG. The nonribosomal peptide synthetase ucdA then condenses two HPPA units to produce atromentin. The key step in this pathway is the reduction and dehydration of atromentin to form a terphenyl triol intermediate, performed by the NAD-dependent dehydrogenase ucdB. Further O-methylation by the methyltransferase ucdC forms terphenyllin carrying two methoxy moieties at C-9 and C-12, and subsequent dihydroxylation at C-3 of ring A and C-15 of ring C by the flavin-dependent oxygenase ucdD leads to 3,15-dihydroxyterphenyllin. Prenylation by ucdE at position C-5 of ring A forms usterphenyllin B, and is followed by a second prenylation at position C-14 of ring C to form usterphenyllin A. The following furan ring formation that leads to uscandidusins A and B was proven to be an unexpected spontaneous non-enzymatic reaction. The sequence is that of NADH-dependent oxidoreductase ucdB from Aspergillus ustus.